Here is an 84-residue protein sequence, read N- to C-terminus: Small ribosomal subunit protein bS16 (84 aa).

It belongs to the bacterial ribosomal protein bS16 family.

The sequence is that of Small ribosomal subunit protein bS16 from Cupriavidus necator (strain ATCC 17699 / DSM 428 / KCTC 22496 / NCIMB 10442 / H16 / Stanier 337) (Ralstonia eutropha).